The following is a 78-amino-acid chain: Small ribosomal subunit protein uS17 (78 aa).

This sequence belongs to the universal ribosomal protein uS17 family. Part of the 30S ribosomal subunit.

Functionally, one of the primary rRNA binding proteins, it binds specifically to the 5'-end of 16S ribosomal RNA. The protein is Small ribosomal subunit protein uS17 of Sinorhizobium fredii (strain NBRC 101917 / NGR234).